A 314-amino-acid polypeptide reads, in one-letter code: Transcription factor DICHOTOMA (314 aa).

The 59-residue stretch at 87-145 folds into the TCP domain; sequence KKDRHSKINRPQGPRDRRVRLSIGIARKFFDLQEMLGFDKPSKTLDWLLTKSKEAIKEL. In terms of domain architecture, R spans 201–218; the sequence is KESRAKARARARERTKEK.

It is found in the nucleus. Transcription regulator involved in the dorsovental asymmetry of flowers. Promotes dorsal identity. In Antirrhinum majus (Garden snapdragon), this protein is Transcription factor DICHOTOMA (DICH).